The chain runs to 364 residues: D-alanine--D-alanine ligase (364 aa).

The ATP-grasp domain occupies 134 to 347; the sequence is RRLACINGLK…YPDLLDELIN (214 aa). ATP is bound at residue 167–222; it reads ASEFGWPLFVKPCSLGSSVGIHKANNMDELNAAVADALRYDEEILVEEFIVGREIE. Residues aspartate 300, glutamate 314, and asparagine 316 each contribute to the Mg(2+) site.

The protein belongs to the D-alanine--D-alanine ligase family. It depends on Mg(2+) as a cofactor. Mn(2+) is required as a cofactor.

The protein resides in the cytoplasm. The catalysed reaction is 2 D-alanine + ATP = D-alanyl-D-alanine + ADP + phosphate + H(+). It participates in cell wall biogenesis; peptidoglycan biosynthesis. Functionally, cell wall formation. This chain is D-alanine--D-alanine ligase, found in Legionella pneumophila (strain Paris).